The primary structure comprises 584 residues: NADPH-dependent diflavin oxidoreductase 1 (584 aa).

Residues 6–150 (IYILYGSETG…VFAYWCNHLY (145 aa)) enclose the Flavodoxin-like domain. FMN is bound by residues 12–17 (SETGTA), 59–62 (STTG), 97–106 (CGDTSYTRFN), and E132. The region spanning 199–436 (RGKIEATLVH…LPGFLNLSYQ (238 aa)) is the FAD-binding FR-type domain. FAD-binding positions include R343, 373 to 376 (RQYS), and 407 to 410 (GICS). NADP(+) contacts are provided by residues T448, 503-504 (SR), and 509-513 (KKYVQ). W584 is a binding site for FAD.

This sequence belongs to the NADPH-dependent diflavin oxidoreductase NDOR1 family. The protein in the N-terminal section; belongs to the flavodoxin family. In the C-terminal section; belongs to the flavoprotein pyridine nucleotide cytochrome reductase family. As to quaternary structure, interacts with dre2; as part of the cytosolic iron-sulfur (Fe-S) protein assembly (CIA) machinery. Requires FAD as cofactor. FMN serves as cofactor.

The protein localises to the cytoplasm. The protein resides in the mitochondrion. It carries out the reaction 2 oxidized [2Fe-2S]-[protein] + NADPH = 2 reduced [2Fe-2S]-[protein] + NADP(+) + H(+). Its function is as follows. NADPH-dependent reductase which is a central component of the cytosolic iron-sulfur (Fe-S) protein assembly (CIA) machinery. Transfers electrons from NADPH via its FAD and FMN prosthetic groups to the [2Fe-2S] cluster of dre2, another key component of the CIA machinery. In turn, this reduced cluster provides electrons for assembly of cytosolic iron-sulfur cluster proteins. Positively controls H(2)O(2)-induced cell death. This chain is NADPH-dependent diflavin oxidoreductase 1, found in Schizosaccharomyces pombe (strain 972 / ATCC 24843) (Fission yeast).